A 391-amino-acid chain; its full sequence is Phosphoprotein (391 aa).

Phosphothreonine occurs at positions 10 and 16. The segment covering 54-65 (QKNIQHPTASHQ) has biased composition (polar residues). 2 disordered regions span residues 54–98 (QKNI…EPLF) and 145–186 (TSTP…RSGS). Serine 69 is subject to Phosphoserine. Residues threonine 91, threonine 150, and threonine 165 each carry the phosphothreonine modification. Phosphoserine is present on serine 188. The stretch at 218–245 (ANEIMDLLRGMDARLQHLEQKVDKVLAQ) forms a coiled coil. Threonine 250 is modified (phosphothreonine). Phosphoserine is present on serine 257. Phosphothreonine is present on residues threonine 258 and threonine 282. 2 positions are modified to phosphoserine: serine 292 and serine 294. Threonine 298 carries the phosphothreonine modification. Phosphoserine occurs at positions 301 and 374. Residues 343–391 (AGRKVMITKMITDCVANPQMKQAFEQRLAKASTEDALNDIKRDIIRNAI) form an interaction with the nucleoprotein region. Phosphothreonine is present on threonine 375.

The protein belongs to the rubulavirus/avulavirus P protein family. In terms of assembly, homotetramer. Interacts (via multimerization domain) with polymerase L; this interaction forms the polymerase L-P complex. Interacts (via N-terminus) with N0 (via Ncore); this interaction allows P to chaperon N0 to avoid N polymerization before encapsidation. Interacts (via C-terminus) with N-RNA template; this interaction positions the polymerase on the template for both transcription and replication. Interacts with host RPS6KB1 kinase; this interaction may play a role in the viral replication and transcription.

Its subcellular location is the virion. Functionally, essential cofactor of the RNA polymerase L that plays a central role in the transcription and replication by forming the polymerase complex with RNA polymerase L and recruiting L to the genomic N-RNA template for RNA synthesis. Also plays a central role in the encapsidation of nascent RNA chains by forming the encapsidation complex with the nucleocapsid protein N (N-P complex). Acts as a chaperone for newly synthesized free N protein, so-called N0, allowing encapsidation of nascent RNA chains during replication. The nucleoprotein protein N prevents excessive phosphorylation of P, which leads to down-regulation of viral transcription/ replication. Participates, together with N, in the formation of viral factories (viroplasms), which are large inclusions in the host cytoplasm where replication takes place. The polypeptide is Phosphoprotein (Mumps virus genotype N (strain L-Zagreb vaccine) (MuV)).